The sequence spans 2248 residues: Zinc finger protein lin-13 (2248 aa).

The tract at residues 1–189 (MDEFELFQQL…TYASQYSRPP (189 aa)) is disordered. Polar residues predominate over residues 29 to 38 (QQANNNQSAP). Residues 54–92 (KQREEEEAQRLADFMQKDMKEPAVKRKRGSEEYKKDPLE) show a composition bias toward basic and acidic residues. Residues 145-155 (ELDENYMEENE) show a composition bias toward acidic residues. Residues 440-444 (PLVPV) carry the Required for interaction with hpl-2 isoform a motif. The segment at 503–525 (HTCIKCGKTFGTEFMLKHHAQSH) adopts a C2H2-type 1 zinc-finger fold. A disordered region spans residues 603–665 (KTKKENRNIT…FTSSKQKKKR (63 aa)). Positions 605–620 (KKENRNITDSNEKEFS) are enriched in basic and acidic residues. 6 consecutive C2H2-type zinc fingers follow at residues 812–837 (VRCI…SDVH), 959–982 (YSCS…TRFH), 1140–1162 (LMCY…MDDH), 1556–1578 (FKCQ…MRDH), 1601–1623 (WLCR…MAIH), and 1657–1680 (YSCG…SVAH). Over residues 1859-1877 (PRSSLQTNGSSMGSVTTNG) the composition is skewed to polar residues. The disordered stretch occupies residues 1859–1900 (PRSSLQTNGSSMGSVTTNGGRVVRPSPPNSMNVTLRRAPPQQ).

Interacts (via PLVPV motif) with chromobox protein homolog hpl-2 (via chromo (shadow subtype) domain); the interaction is direct and influences localization of hpl-2 to nuclear foci. As to expression, in the L3 stage, expressed in syncytial hypodermal cell 7, body wall muscles, intestinal cells, distal tip cells and many neurons.

It localises to the nucleus. Involved in repression of vulval fate, possibly by a tumor suppressor protein Rb-mediated mechanism. May act in a common pathway with retinoblastoma-like protein homolog lin-35 and hpl-2 to influence the ER stress response in the intestine. Plays a role in recruiting chromobox protein homolog hpl-2 to specific chromatin sites. The sequence is that of Zinc finger protein lin-13 (lin-13) from Caenorhabditis elegans.